Reading from the N-terminus, the 545-residue chain is CTP synthase (545 aa).

The amidoligase domain stretch occupies residues 1–266; sequence MATNYIFVTG…DSFVCDRFRL (266 aa). Ser-14 contacts CTP. UTP is bound at residue Ser-14. ATP-binding positions include 15–20 and Asp-72; that span reads SLGKGI. Residues Asp-72 and Glu-140 each coordinate Mg(2+). Residues 147 to 149, 187 to 192, and Lys-223 each bind CTP; these read DIE and KTKPTQ. UTP is bound by residues 187–192 and Lys-223; that span reads KTKPTQ. An ATP-binding site is contributed by 239–241; that stretch reads KDV. The 252-residue stretch at 291–542 folds into the Glutamine amidotransferase type-1 domain; it reads TIGMVGKYVE…VAAAKAYQDS (252 aa). L-glutamine is bound at residue Gly-352. The Nucleophile; for glutamine hydrolysis role is filled by Cys-379. Residues 380 to 383, Glu-403, and Arg-470 contribute to the L-glutamine site; that span reads LGMQ. Residues His-515 and Glu-517 contribute to the active site.

It belongs to the CTP synthase family. As to quaternary structure, homotetramer.

It carries out the reaction UTP + L-glutamine + ATP + H2O = CTP + L-glutamate + ADP + phosphate + 2 H(+). It catalyses the reaction L-glutamine + H2O = L-glutamate + NH4(+). The enzyme catalyses UTP + NH4(+) + ATP = CTP + ADP + phosphate + 2 H(+). It functions in the pathway pyrimidine metabolism; CTP biosynthesis via de novo pathway; CTP from UDP: step 2/2. With respect to regulation, allosterically activated by GTP, when glutamine is the substrate; GTP has no effect on the reaction when ammonia is the substrate. The allosteric effector GTP functions by stabilizing the protein conformation that binds the tetrahedral intermediate(s) formed during glutamine hydrolysis. Inhibited by the product CTP, via allosteric rather than competitive inhibition. In terms of biological role, catalyzes the ATP-dependent amination of UTP to CTP with either L-glutamine or ammonia as the source of nitrogen. Regulates intracellular CTP levels through interactions with the four ribonucleotide triphosphates. This Haemophilus ducreyi (strain 35000HP / ATCC 700724) protein is CTP synthase.